We begin with the raw amino-acid sequence, 503 residues long: UDP-N-acetylmuramoylalanine--D-glutamate ligase (503 aa).

129–135 lines the ATP pocket; that stretch reads GTNGKTT.

The protein belongs to the MurCDEF family.

It is found in the cytoplasm. The catalysed reaction is UDP-N-acetyl-alpha-D-muramoyl-L-alanine + D-glutamate + ATP = UDP-N-acetyl-alpha-D-muramoyl-L-alanyl-D-glutamate + ADP + phosphate + H(+). The protein operates within cell wall biogenesis; peptidoglycan biosynthesis. In terms of biological role, cell wall formation. Catalyzes the addition of glutamate to the nucleotide precursor UDP-N-acetylmuramoyl-L-alanine (UMA). This chain is UDP-N-acetylmuramoylalanine--D-glutamate ligase, found in Burkholderia cenocepacia (strain HI2424).